A 593-amino-acid polypeptide reads, in one-letter code: Proline--tRNA ligase (593 aa).

It belongs to the class-II aminoacyl-tRNA synthetase family. ProS type 1 subfamily. As to quaternary structure, homodimer.

The protein resides in the cytoplasm. It catalyses the reaction tRNA(Pro) + L-proline + ATP = L-prolyl-tRNA(Pro) + AMP + diphosphate. Functionally, catalyzes the attachment of proline to tRNA(Pro) in a two-step reaction: proline is first activated by ATP to form Pro-AMP and then transferred to the acceptor end of tRNA(Pro). As ProRS can inadvertently accommodate and process non-cognate amino acids such as alanine and cysteine, to avoid such errors it has two additional distinct editing activities against alanine. One activity is designated as 'pretransfer' editing and involves the tRNA(Pro)-independent hydrolysis of activated Ala-AMP. The other activity is designated 'posttransfer' editing and involves deacylation of mischarged Ala-tRNA(Pro). The misacylated Cys-tRNA(Pro) is not edited by ProRS. The sequence is that of Proline--tRNA ligase from Parasynechococcus marenigrum (strain WH8102).